A 99-amino-acid chain; its full sequence is U1-theraphotoxin-Lsp1b (99 aa).

Residues 1-23 (MRSLTLAALLLCSLLLVFHTSAA) form the signal peptide. A propeptide spanning residues 24-50 (EELQAQEGHLMIPGDTDTALETVDDER) is cleaved from the precursor. Cystine bridges form between cysteine 54/cysteine 67, cysteine 58/cysteine 91, cysteine 72/cysteine 74, and cysteine 85/cysteine 96.

The protein belongs to the neurotoxin 12 (Hwtx-2) family. 04 (lasiotoxin) subfamily. Expressed by the venom gland.

The protein localises to the secreted. Functionally, toxin that causes irreversible contractile paralysis into adult Aedes aegypti resulting in 100% mortality after 24 hours. In Lasiodora sp. (strain IBSP 8539) (Brazilian salmon pink birdeater), this protein is U1-theraphotoxin-Lsp1b.